Consider the following 252-residue polypeptide: Thiazole synthase (252 aa).

Residue K98 is the Schiff-base intermediate with DXP of the active site. 1-deoxy-D-xylulose 5-phosphate contacts are provided by residues G159, 185-186 (AG), and 207-208 (AS).

The protein belongs to the ThiG family. As to quaternary structure, homotetramer. Forms heterodimers with either ThiH or ThiS.

The protein resides in the cytoplasm. The catalysed reaction is [ThiS sulfur-carrier protein]-C-terminal-Gly-aminoethanethioate + 2-iminoacetate + 1-deoxy-D-xylulose 5-phosphate = [ThiS sulfur-carrier protein]-C-terminal Gly-Gly + 2-[(2R,5Z)-2-carboxy-4-methylthiazol-5(2H)-ylidene]ethyl phosphate + 2 H2O + H(+). It functions in the pathway cofactor biosynthesis; thiamine diphosphate biosynthesis. Its function is as follows. Catalyzes the rearrangement of 1-deoxy-D-xylulose 5-phosphate (DXP) to produce the thiazole phosphate moiety of thiamine. Sulfur is provided by the thiocarboxylate moiety of the carrier protein ThiS. In vitro, sulfur can be provided by H(2)S. The protein is Thiazole synthase of Mycobacterium tuberculosis (strain ATCC 25177 / H37Ra).